The chain runs to 132 residues: MTEASESCVRDPSNYRDRSADWYAFYDERRRKEIIDIIDEHPEIVEEHAANPFGYRKHPSPYLQRVHNYFRMQPTFGKYYIYSEREWDAYRIATIREFGELPELGDERFKTEEEAMHAVFLRRIEDVRAELA.

As to quaternary structure, heterotetramer of two DmfA1 (alpha) and two DmfA2 (beta) subunits.

The catalysed reaction is N,N-dimethylformamide + H2O = dimethylamine + formate. Activity is slightly inhibited by Mg(2+) and Mn(2+), and slightly increased by Cu(2+). Activity is slightly inhibited by the chelating agents 8-hydroxyquinoline, ethylenediaminetetraacetate, o-phenanthroline and 2,2'-bipyridyl. In terms of biological role, hydrolyzes N,N-dimethylformamide, and to a lesser extent N,N-dimethylacetamide and N,N-diethylacetamide. Has no activity against the substituted amides N-methylformamide, N-ethylformamide, N-ethylformamide and N-methylacetamide or the unsubstituted amides formamide, nicotinamide, acetoamide, benzamide, acetamide and acrylamide. In Alcaligenes sp, this protein is N,N-dimethylformamidase alpha subunit.